Consider the following 406-residue polypeptide: Succinylornithine transaminase (406 aa).

An N6-(pyridoxal phosphate)lysine modification is found at Lys252.

Belongs to the class-III pyridoxal-phosphate-dependent aminotransferase family. AstC subfamily. Pyridoxal 5'-phosphate is required as a cofactor.

It carries out the reaction N(2)-succinyl-L-ornithine + 2-oxoglutarate = N-succinyl-L-glutamate 5-semialdehyde + L-glutamate. It participates in amino-acid degradation; L-arginine degradation via AST pathway; L-glutamate and succinate from L-arginine: step 3/5. Its function is as follows. Catalyzes the transamination of N(2)-succinylornithine and alpha-ketoglutarate into N(2)-succinylglutamate semialdehyde and glutamate. Can also act as an acetylornithine aminotransferase. The protein is Succinylornithine transaminase of Escherichia coli (strain SMS-3-5 / SECEC).